Consider the following 411-residue polypeptide: Putative BMP-2-inducible kinase-like protein (411 aa).

Disordered stretches follow at residues 1 to 87 (MIAP…TQDI), 215 to 280 (SQQQ…RVSQ), and 392 to 411 (QQSQ…PSKQ). Basic and acidic residues-rich tracts occupy residues 8–18 (SSEEEGQKDEE) and 53–68 (EKRS…KAKY). Positions 47–71 (EDEEEEEKRSSDSDYEQAKAKYSDM) form a coiled coil. 2 stretches are compositionally biased toward basic residues: residues 220–234 (VKQR…RQRR) and 243–258 (NGKR…KKTL).

The protein is Putative BMP-2-inducible kinase-like protein (BMP2KL) of Homo sapiens (Human).